The following is a 413-amino-acid chain: Histidine--tRNA ligase (413 aa).

This sequence belongs to the class-II aminoacyl-tRNA synthetase family. As to quaternary structure, homodimer.

The protein localises to the cytoplasm. The catalysed reaction is tRNA(His) + L-histidine + ATP = L-histidyl-tRNA(His) + AMP + diphosphate + H(+). The sequence is that of Histidine--tRNA ligase from Geobacter sulfurreducens (strain ATCC 51573 / DSM 12127 / PCA).